The following is a 99-amino-acid chain: Large ribosomal subunit protein uL23 (99 aa).

This sequence belongs to the universal ribosomal protein uL23 family. As to quaternary structure, part of the 50S ribosomal subunit. Contacts protein L29, and trigger factor when it is bound to the ribosome.

In terms of biological role, one of the early assembly proteins it binds 23S rRNA. One of the proteins that surrounds the polypeptide exit tunnel on the outside of the ribosome. Forms the main docking site for trigger factor binding to the ribosome. The polypeptide is Large ribosomal subunit protein uL23 (Rhodopseudomonas palustris (strain HaA2)).